Here is a 600-residue protein sequence, read N- to C-terminus: Terpenoid synthase 8 (600 aa).

Residues Asp352, Asp356, Asn497, and Asp505 each contribute to the Mg(2+) site. The DDXXD motif motif lies at 352 to 356; that stretch reads DDTCD.

This sequence belongs to the terpene synthase family. Tpsa subfamily. It depends on Mg(2+) as a cofactor. The cofactor is Mn(2+). As to expression, stele, and tips of primary and secondary root.

The protein resides in the plastid. It catalyses the reaction (2E,6E,10E)-geranylgeranyl diphosphate = rhizathalene A + diphosphate. It participates in secondary metabolite biosynthesis; terpenoid biosynthesis. Functionally, catalyzes the synthesis of the semivolatile diterpene rhizatalene A. In Arabidopsis thaliana (Mouse-ear cress), this protein is Terpenoid synthase 8 (TPS08).